The chain runs to 101 residues: Small ribosomal subunit protein uS14 (101 aa).

The protein belongs to the universal ribosomal protein uS14 family. Part of the 30S ribosomal subunit. Contacts proteins S3 and S10.

In terms of biological role, binds 16S rRNA, required for the assembly of 30S particles and may also be responsible for determining the conformation of the 16S rRNA at the A site. This chain is Small ribosomal subunit protein uS14, found in Bordetella petrii (strain ATCC BAA-461 / DSM 12804 / CCUG 43448).